Reading from the N-terminus, the 541-residue chain is Tyrosine-protein kinase Yes (541 aa).

G2 carries the N-myristoyl glycine lipid modification. The S-palmitoyl cysteine; in membrane form moiety is linked to residue C3. Y32 carries the phosphotyrosine modification. Residues 89–150 (GGVTIFVALY…PSNYVVPADS (62 aa)) form the SH3 domain. In terms of domain architecture, SH2 spans 156–253 (WYFGKMGRKD…GLCHKLTTVC (98 aa)). Positions 275 to 528 (LRLEVKLGQG…YIQSFLEDYF (254 aa)) constitute a Protein kinase domain. Residues 281 to 289 (LGQGCFGEV) and K303 contribute to the ATP site. Y334 and Y343 each carry phosphotyrosine. The active-site Proton acceptor is D394. Y424 is modified (phosphotyrosine; by autocatalysis). Y535 is modified (phosphotyrosine).

This sequence belongs to the protein kinase superfamily. Tyr protein kinase family. SRC subfamily. Interacts with YAP1. Interacts with FASLG. Interacts with CTNND1; this interaction allows YES1-mediated activation of FYN and FER and subsequent phosphorylation of CTNND1. Interacts with CSF1R. Interacts with IL6ST/gp130. Interacts with SCRIB, when YES1 is in a closed conformation; the interaction facilitates YES1 autophosphorylation. Post-translationally, phosphorylated. Phosphorylation by CSK on the C-terminal tail maintains the enzyme in an inactive state. Autophosphorylation at Tyr-424 maintains enzyme activity by blocking CSK-mediated inhibition. Palmitoylation at Cys-3 promotes membrane localization.

Its subcellular location is the cell membrane. The protein resides in the cytoplasm. It localises to the cytoskeleton. The protein localises to the microtubule organizing center. It is found in the centrosome. Its subcellular location is the cytosol. The protein resides in the cell junction. It carries out the reaction L-tyrosyl-[protein] + ATP = O-phospho-L-tyrosyl-[protein] + ADP + H(+). Non-receptor protein tyrosine kinase that is involved in the regulation of cell growth and survival, apoptosis, cell-cell adhesion, cytoskeleton remodeling, and differentiation. Stimulation by receptor tyrosine kinases (RTKs) including EGFR, PDGFR, CSF1R and FGFR leads to recruitment of YES1 to the phosphorylated receptor, and activation and phosphorylation of downstream substrates. Upon EGFR activation, promotes the phosphorylation of PARD3 to favor epithelial tight junction assembly. Participates in the phosphorylation of specific junctional components such as CTNND1 by stimulating the FYN and FER tyrosine kinases at cell-cell contacts. Upon T-cell stimulation by CXCL12, phosphorylates collapsin response mediator protein 2/DPYSL2 and induces T-cell migration. Participates in CD95L/FASLG signaling pathway and mediates AKT-mediated cell migration. Plays a role in cell cycle progression by phosphorylating the cyclin dependent kinase 4/CDK4 thus regulating the G1 phase. Also involved in G2/M progression and cytokinesis. Catalyzes phosphorylation of organic cation transporter OCT2 which induces its transport activity. This Mus musculus (Mouse) protein is Tyrosine-protein kinase Yes (Yes1).